Here is a 375-residue protein sequence, read N- to C-terminus: o-succinylbenzoate synthase (375 aa).

The active-site Proton donor is the K166. The Mg(2+) site is built by D191, E216, and D241. Residue K265 is the Proton acceptor of the active site.

Belongs to the mandelate racemase/muconate lactonizing enzyme family. MenC type 2 subfamily. In terms of assembly, homotetramer. A divalent metal cation is required as a cofactor.

It catalyses the reaction (1R,6R)-6-hydroxy-2-succinyl-cyclohexa-2,4-diene-1-carboxylate = 2-succinylbenzoate + H2O. It carries out the reaction N-acetyl-D-methionine = N-acetyl-L-methionine. The catalysed reaction is N-acetyl-D-phenylalanine = N-acetyl-L-phenylalanine. Its pathway is quinol/quinone metabolism; 1,4-dihydroxy-2-naphthoate biosynthesis; 1,4-dihydroxy-2-naphthoate from chorismate: step 4/7. It participates in quinol/quinone metabolism; menaquinone biosynthesis. Its function is as follows. Converts 2-succinyl-6-hydroxy-2,4-cyclohexadiene-1-carboxylate (SHCHC) to 2-succinylbenzoate (OSB). Also acts as a N-succinylamino acid racemase (NSAR) that catalyzes the racemization of various N-succinylamino acids, including N-succinyl-alanine and N-succinyl-phenylalanine. Can catalyze the racemization of a broad range of N-acylamino acids, including N-acetyl-methionine, N-acetyl-phenylalanine, N-carbamoyl-methionine, N-formyl-D-methionine, N-formyl-D-norleucine and N-carbamoyl-D-norleucine. May be a bifunctional enzyme involved in menaquinone biosynthesis and in an irreversible pathway for the conversion of D- to L-amino acids, thereby facilitating the survival and/or growth of the organism. In Geobacillus kaustophilus, this protein is o-succinylbenzoate synthase.